We begin with the raw amino-acid sequence, 73 residues long: Protein SlyX homolog (73 aa).

Belongs to the SlyX family.

The chain is Protein SlyX homolog from Haemophilus influenzae (strain PittEE).